The primary structure comprises 471 residues: ATP synthase subunit beta, chloroplastic (471 aa).

151 to 158 (GGAGVGKT) is a binding site for ATP.

This sequence belongs to the ATPase alpha/beta chains family. In terms of assembly, F-type ATPases have 2 components, CF(1) - the catalytic core - and CF(0) - the membrane proton channel. CF(1) has five subunits: alpha(3), beta(3), gamma(1), delta(1), epsilon(1). CF(0) has four main subunits: a(1), b(1), b'(1) and c(9-12).

It localises to the plastid. Its subcellular location is the chloroplast thylakoid membrane. It catalyses the reaction ATP + H2O + 4 H(+)(in) = ADP + phosphate + 5 H(+)(out). Produces ATP from ADP in the presence of a proton gradient across the membrane. The catalytic sites are hosted primarily by the beta subunits. This Rhodomonas salina (Cryptomonas salina) protein is ATP synthase subunit beta, chloroplastic.